Reading from the N-terminus, the 261-residue chain is 3'-5' ssDNA/RNA exonuclease TatD (261 aa).

A divalent metal cation contacts are provided by glutamate 92, histidine 128, and histidine 153.

The protein belongs to the metallo-dependent hydrolases superfamily. TatD-type hydrolase family. TatD subfamily. In terms of assembly, monomer. The cofactor is Mg(2+).

The protein resides in the cytoplasm. In terms of biological role, 3'-5' exonuclease that prefers single-stranded DNA and RNA. May play a role in the H(2)O(2)-induced DNA damage repair. The sequence is that of 3'-5' ssDNA/RNA exonuclease TatD from Erwinia billingiae (strain Eb661).